The sequence spans 68 residues: Putative membrane protein insertion efficiency factor (68 aa).

The protein belongs to the UPF0161 family.

Its subcellular location is the cell membrane. Functionally, could be involved in insertion of integral membrane proteins into the membrane. The protein is Putative membrane protein insertion efficiency factor of Herpetosiphon aurantiacus (strain ATCC 23779 / DSM 785 / 114-95).